Reading from the N-terminus, the 252-residue chain is Ubiquinone biosynthesis O-methyltransferase (252 aa).

Residues R45, G76, D97, and M141 each contribute to the S-adenosyl-L-methionine site.

It belongs to the methyltransferase superfamily. UbiG/COQ3 family.

It carries out the reaction a 3-demethylubiquinol + S-adenosyl-L-methionine = a ubiquinol + S-adenosyl-L-homocysteine + H(+). The catalysed reaction is a 3-(all-trans-polyprenyl)benzene-1,2-diol + S-adenosyl-L-methionine = a 2-methoxy-6-(all-trans-polyprenyl)phenol + S-adenosyl-L-homocysteine + H(+). The protein operates within cofactor biosynthesis; ubiquinone biosynthesis. O-methyltransferase that catalyzes the 2 O-methylation steps in the ubiquinone biosynthetic pathway. This chain is Ubiquinone biosynthesis O-methyltransferase, found in Caulobacter vibrioides (strain ATCC 19089 / CIP 103742 / CB 15) (Caulobacter crescentus).